Consider the following 161-residue polypeptide: Non-secretory ribonuclease (161 aa).

Positions 1–27 (MVPKLFTSQICLLLLLGLMGVEGSLHA) are cleaved as a signal peptide. Trp-34 carries a C-linked (Man) tryptophan glycan. The Proton acceptor role is filled by His-42. Residue Asn-44 is glycosylated (N-linked (GlcNAc...) asparagine). 4 cysteine pairs are disulfide-bonded: Cys-50/Cys-110, Cys-64/Cys-123, Cys-82/Cys-138, and Cys-89/Cys-98. Tyr-60 is modified (3'-nitrotyrosine). 65 to 69 (KNQNT) is a substrate binding site. N-linked (GlcNAc...) asparagine glycosylation is found at Asn-86, Asn-92, Asn-111, and Asn-119. His-156 acts as the Proton donor in catalysis.

It belongs to the pancreatic ribonuclease family. As to quaternary structure, interacts with and forms a tight 1:1 complex with RNH1. Dimerization of two such complexes may occur.

The protein resides in the lysosome. It localises to the cytoplasmic granule. It catalyses the reaction an [RNA] containing cytidine + H2O = an [RNA]-3'-cytidine-3'-phosphate + a 5'-hydroxy-ribonucleotide-3'-[RNA].. The catalysed reaction is an [RNA] containing uridine + H2O = an [RNA]-3'-uridine-3'-phosphate + a 5'-hydroxy-ribonucleotide-3'-[RNA].. This is a non-secretory ribonuclease. It is a pyrimidine specific nuclease with a slight preference for U. Cytotoxin and helminthotoxin. Possesses a wide variety of biological activities. This is Non-secretory ribonuclease (RNASE2) from Nomascus leucogenys (Northern white-cheeked gibbon).